The primary structure comprises 296 residues: Bifunctional protein FolD 1 (296 aa).

NADP(+) contacts are provided by residues 167–169 (GCG) and I235.

This sequence belongs to the tetrahydrofolate dehydrogenase/cyclohydrolase family. Homodimer.

It catalyses the reaction (6R)-5,10-methylene-5,6,7,8-tetrahydrofolate + NADP(+) = (6R)-5,10-methenyltetrahydrofolate + NADPH. The enzyme catalyses (6R)-5,10-methenyltetrahydrofolate + H2O = (6R)-10-formyltetrahydrofolate + H(+). It functions in the pathway one-carbon metabolism; tetrahydrofolate interconversion. Its function is as follows. Catalyzes the oxidation of 5,10-methylenetetrahydrofolate to 5,10-methenyltetrahydrofolate and then the hydrolysis of 5,10-methenyltetrahydrofolate to 10-formyltetrahydrofolate. The protein is Bifunctional protein FolD 1 of Nocardioides sp. (strain ATCC BAA-499 / JS614).